Here is a 537-residue protein sequence, read N- to C-terminus: 2-isopropylmalate synthase (537 aa).

Positions 8 to 269 (VLIFDTTLRD…YFNGYLGRAE (262 aa)) constitute a Pyruvate carboxyltransferase domain. The Mn(2+) site is built by Asp17, His208, His210, and Asn244. Residues 408 to 537 (QLAGVQVSCG…QRAPLPAPAL (130 aa)) form a regulatory domain region.

It belongs to the alpha-IPM synthase/homocitrate synthase family. LeuA type 1 subfamily. In terms of assembly, homodimer. Requires Mn(2+) as cofactor.

Its subcellular location is the cytoplasm. It carries out the reaction 3-methyl-2-oxobutanoate + acetyl-CoA + H2O = (2S)-2-isopropylmalate + CoA + H(+). It functions in the pathway amino-acid biosynthesis; L-leucine biosynthesis; L-leucine from 3-methyl-2-oxobutanoate: step 1/4. Catalyzes the condensation of the acetyl group of acetyl-CoA with 3-methyl-2-oxobutanoate (2-ketoisovalerate) to form 3-carboxy-3-hydroxy-4-methylpentanoate (2-isopropylmalate). In Synechococcus sp. (strain RCC307), this protein is 2-isopropylmalate synthase.